Here is a 184-residue protein sequence, read N- to C-terminus: Peptide deformylase (184 aa).

Residues Cys-98 and His-140 each coordinate Fe cation. Glu-141 is a catalytic residue. His-144 lines the Fe cation pocket.

It belongs to the polypeptide deformylase family. Fe(2+) is required as a cofactor.

It carries out the reaction N-terminal N-formyl-L-methionyl-[peptide] + H2O = N-terminal L-methionyl-[peptide] + formate. Functionally, removes the formyl group from the N-terminal Met of newly synthesized proteins. Requires at least a dipeptide for an efficient rate of reaction. N-terminal L-methionine is a prerequisite for activity but the enzyme has broad specificity at other positions. This Bacteroides thetaiotaomicron (strain ATCC 29148 / DSM 2079 / JCM 5827 / CCUG 10774 / NCTC 10582 / VPI-5482 / E50) protein is Peptide deformylase.